We begin with the raw amino-acid sequence, 369 residues long: Peptide chain release factor 2 (369 aa).

N5-methylglutamine is present on Gln251.

The protein belongs to the prokaryotic/mitochondrial release factor family. In terms of processing, methylated by PrmC. Methylation increases the termination efficiency of RF2.

The protein resides in the cytoplasm. Its function is as follows. Peptide chain release factor 2 directs the termination of translation in response to the peptide chain termination codons UGA and UAA. The sequence is that of Peptide chain release factor 2 from Acidothermus cellulolyticus (strain ATCC 43068 / DSM 8971 / 11B).